The chain runs to 20 residues: Brevinin-1SPb (20 aa).

An intrachain disulfide couples Cys14 to Cys20.

Expressed by the skin glands.

It is found in the secreted. Functionally, antimicrobial peptide with activity against Gram-negative and Gram-positive bacteria (MIC=50 uM against E.coli, MIC=6 uM against S.aureus) and fungi (MIC=13 uM against C.albicans). Shows hemolytic activity on human erythrocytes (HC(50)=25 uM). The polypeptide is Brevinin-1SPb (Lithobates septentrionalis (Mink frog)).